The chain runs to 384 residues: Transcription factor 7 (384 aa).

A compositionally biased stretch (gly residues) spans 1-16; that stretch reads MPQLDSGGGGAGGGDD. Residues 1–59 form a CTNNB1-binding region; the sequence is MPQLDSGGGGAGGGDDLGAPDELLAFQDEGEEQDDKSRDSAAGPERDLAELKSSLVNES. 3 disordered regions span residues 1–88, 133–183, and 337–384; these read MPQL…LGRE, PPSG…QKQV, and SARD…MTVL. The span at 35–50 shows a compositional bias: basic and acidic residues; that stretch reads DKSRDSAAGPERDLAE. Residues 62-78 show a composition bias toward gly residues; sequence AAGGAGIPGVPGAGAGA. Residues 269–337 constitute a DNA-binding region (HMG box); it reads IKKPLNAFML…LHMQLYPGWS (69 aa). The Nuclear localization signal signature appears at 344-348; it reads KKKRR. Positions 352–370 are enriched in basic and acidic residues; sequence KHQESTTGGKRNAFGTYPE. A compositionally biased stretch (low complexity) spans 374 to 384; it reads APAPFLPMTVL.

Belongs to the TCF/LEF family. In terms of assembly, binds the armadillo repeat of CTNNB1 and forms a stable complex. Interacts with TLE5, TLE1, TLE2, TLE3 and TLE4. Interacts with MLLT11. Long isoform interacts (via N-terminus) with SOX13; inhibits WNT-mediated transcriptional activity. Interacts with DAZAP2. Predominantly expressed in T-cells. Also detected in proliferating intestinal epithelial cells and in the basal epithelial cells of mammary gland epithelium.

It is found in the nucleus. Functionally, transcriptional activator involved in T-cell lymphocyte differentiation. Necessary for the survival of CD4(+) CD8(+) immature thymocytes. Isoforms lacking the N-terminal CTNNB1 binding domain cannot fulfill this role. Binds to the T-lymphocyte-specific enhancer element (5'-WWCAAAG-3') found in the promoter of the CD3E gene. Represses expression of the T-cell receptor gamma gene in alpha-beta T-cell lineages. Required for the development of natural killer receptor-positive lymphoid tissue inducer T-cells. TLE1, TLE2, TLE3 and TLE4 repress transactivation mediated by TCF7 and CTNNB1. May also act as feedback transcriptional repressor of CTNNB1 and TCF7L2 target genes. This Homo sapiens (Human) protein is Transcription factor 7.